Reading from the N-terminus, the 136-residue chain is Acidic phospholipase A2 CC-PLA2-2 (136 aa).

An N-terminal signal peptide occupies residues 1-16 (MRTLWIVAVWLMGVEG). Intrachain disulfides connect cysteine 42–cysteine 129, cysteine 44–cysteine 60, cysteine 59–cysteine 109, cysteine 65–cysteine 136, cysteine 66–cysteine 102, cysteine 73–cysteine 95, and cysteine 90–cysteine 100. The Ca(2+) site is built by tyrosine 43, glycine 45, and glycine 47. Residue histidine 63 is part of the active site. Aspartate 64 contacts Ca(2+). The active site involves aspartate 103.

It belongs to the phospholipase A2 family. Group II subfamily. D49 sub-subfamily. It depends on Ca(2+) as a cofactor. In terms of processing, glycosylated (2.5%). As to expression, expressed by the venom gland.

It is found in the secreted. It carries out the reaction a 1,2-diacyl-sn-glycero-3-phosphocholine + H2O = a 1-acyl-sn-glycero-3-phosphocholine + a fatty acid + H(+). Its function is as follows. Snake venom phospholipase A2 that inhibits blood coagulation and platelet aggregation induced by ADP and arachidonic acid. Inhibits tumor cell adhesion and migration in a dose-dependent manner. Abolishes the attachment of human brain microvascular endothelial cells (HBMEC) to fibrinogen (IC(50)=0.2 uM) and dramatically reduces its adhesion to fibronectin (IC(50)=0.3 uM), whereas no effect is observed on type I collagen, vitronectin or laminin 1. Also blocks the cell migration toward fibronectin and fibrinogen. These effects are not dependent of the catalytic activity, but are mediated by alpha-5/beta-1 (ITGA5/ITGB1) and alpha-v-containing (ITGAV) integrins. Also shows anti-angiogenic activity in chicken chorioallantoix membrane assay. Has a relatively high enzymatic activity. PLA2 catalyzes the calcium-dependent hydrolysis of the 2-acyl groups in 3-sn-phosphoglycerides. The sequence is that of Acidic phospholipase A2 CC-PLA2-2 from Cerastes cerastes (Horned desert viper).